A 319-amino-acid chain; its full sequence is 4-hydroxy-3-methylbut-2-enyl diphosphate reductase (319 aa).

C18 lines the [4Fe-4S] cluster pocket. Positions 47 and 81 each coordinate (2E)-4-hydroxy-3-methylbut-2-enyl diphosphate. 2 residues coordinate dimethylallyl diphosphate: H47 and H81. Residues H47 and H81 each contribute to the isopentenyl diphosphate site. Residue C103 coordinates [4Fe-4S] cluster. H131 is a (2E)-4-hydroxy-3-methylbut-2-enyl diphosphate binding site. Dimethylallyl diphosphate is bound at residue H131. Residue H131 participates in isopentenyl diphosphate binding. E133 (proton donor) is an active-site residue. T172 serves as a coordination point for (2E)-4-hydroxy-3-methylbut-2-enyl diphosphate. C202 contributes to the [4Fe-4S] cluster binding site. The (2E)-4-hydroxy-3-methylbut-2-enyl diphosphate site is built by S230, S231, N232, and S275. Dimethylallyl diphosphate-binding residues include S230, S231, N232, and S275. Residues S230, S231, N232, and S275 each coordinate isopentenyl diphosphate.

Belongs to the IspH family. The cofactor is [4Fe-4S] cluster.

It catalyses the reaction isopentenyl diphosphate + 2 oxidized [2Fe-2S]-[ferredoxin] + H2O = (2E)-4-hydroxy-3-methylbut-2-enyl diphosphate + 2 reduced [2Fe-2S]-[ferredoxin] + 2 H(+). It carries out the reaction dimethylallyl diphosphate + 2 oxidized [2Fe-2S]-[ferredoxin] + H2O = (2E)-4-hydroxy-3-methylbut-2-enyl diphosphate + 2 reduced [2Fe-2S]-[ferredoxin] + 2 H(+). It functions in the pathway isoprenoid biosynthesis; dimethylallyl diphosphate biosynthesis; dimethylallyl diphosphate from (2E)-4-hydroxy-3-methylbutenyl diphosphate: step 1/1. The protein operates within isoprenoid biosynthesis; isopentenyl diphosphate biosynthesis via DXP pathway; isopentenyl diphosphate from 1-deoxy-D-xylulose 5-phosphate: step 6/6. Catalyzes the conversion of 1-hydroxy-2-methyl-2-(E)-butenyl 4-diphosphate (HMBPP) into a mixture of isopentenyl diphosphate (IPP) and dimethylallyl diphosphate (DMAPP). Acts in the terminal step of the DOXP/MEP pathway for isoprenoid precursor biosynthesis. In Methylocella silvestris (strain DSM 15510 / CIP 108128 / LMG 27833 / NCIMB 13906 / BL2), this protein is 4-hydroxy-3-methylbut-2-enyl diphosphate reductase.